The sequence spans 71 residues: ATP synthase subunit c (71 aa).

The next 2 helical transmembrane spans lie at 4-24 (IAAA…NGQV) and 47-67 (FIGV…ALIL).

This sequence belongs to the ATPase C chain family. As to quaternary structure, F-type ATPases have 2 components, F(1) - the catalytic core - and F(0) - the membrane proton channel. F(1) has five subunits: alpha(3), beta(3), gamma(1), delta(1), epsilon(1). F(0) has three main subunits: a(1), b(2) and c(10-14). The alpha and beta chains form an alternating ring which encloses part of the gamma chain. F(1) is attached to F(0) by a central stalk formed by the gamma and epsilon chains, while a peripheral stalk is formed by the delta and b chains.

It is found in the cell membrane. Functionally, f(1)F(0) ATP synthase produces ATP from ADP in the presence of a proton or sodium gradient. F-type ATPases consist of two structural domains, F(1) containing the extramembraneous catalytic core and F(0) containing the membrane proton channel, linked together by a central stalk and a peripheral stalk. During catalysis, ATP synthesis in the catalytic domain of F(1) is coupled via a rotary mechanism of the central stalk subunits to proton translocation. In terms of biological role, key component of the F(0) channel; it plays a direct role in translocation across the membrane. A homomeric c-ring of between 10-14 subunits forms the central stalk rotor element with the F(1) delta and epsilon subunits. This Enterococcus hirae (strain ATCC 9790 / DSM 20160 / JCM 8729 / LMG 6399 / NBRC 3181 / NCIMB 6459 / NCDO 1258 / NCTC 12367 / WDCM 00089 / R) protein is ATP synthase subunit c.